A 720-amino-acid chain; its full sequence is Nucleoporin NUP2 (720 aa).

The disordered stretch occupies residues 1-33 (MAKRVADAQIQRETYDSNESDDDVTPSTKVASS). Ser-17 and Ser-20 each carry phosphoserine. Positions 35–50 (VMNRRKIAMPKRRMAF) are interaction with SRP1 NLS binding site 1. 2 disordered regions span residues 52–92 (PFGS…SNSR) and 136–278 (KSIE…VDNN). One copy of the FXF 1 repeat lies at 67–69 (FSF). Residues 81 to 92 (VDNSPTTESNSR) show a composition bias toward polar residues. Residue Ser-137 is modified to Phosphoserine. The span at 147–159 (NDAKPAKVEDVQK) shows a compositional bias: basic and acidic residues. A Phosphoserine modification is found at Ser-165. One copy of the FXFG 1 repeat lies at 189–192 (FSFG). Residues 193-202 (PKKENRKKDE) are compositionally biased toward basic and acidic residues. 2 positions are modified to phosphoserine: Ser-203 and Ser-205. FXF repeat units follow at residues 216–218 (FKF) and 247–249 (FSF). Polar residues predominate over residues 243 to 278 (NAKPFSFSSATSTTEQTKSKNPLSLTEATKTNVDNN). FXFG repeat units lie at residues 285 to 288 (FTFG), 302 to 305 (FVFG), and 318 to 321 (FTFG). Residues 315 to 324 (KSSFTFGSTT) show a composition bias toward polar residues. The tract at residues 315–604 (KSSFTFGSTT…KPINLQNGEE (290 aa)) is disordered. Low complexity predominate over residues 345-360 (SNDSNPSFSFSIPSKN). Phosphoserine is present on residues Ser-348 and Ser-351. The FXF 4 repeat unit spans residues 352–354 (FSF). The residue at position 361 (Thr-361) is a Phosphothreonine. Residues 369-372 (FSFG) form an FXFG 5 repeat. Over residues 373–384 (VPNSSKNETSKP) the composition is skewed to polar residues. An FXFG 6 repeat occupies 386 to 389 (FSFG). The segment covering 424-435 (TEKEKESKKDSK) has biased composition (basic and acidic residues). FXFG repeat units follow at residues 438–441 (FSFG), 474–477 (FSFG), 493–496 (FTFG), 511–514 (FSFG), and 524–527 (FSFG). The segment covering 479–495 (NTNTTKTADTKAPTFTF) has biased composition (low complexity). Polar residues predominate over residues 513-533 (FGTSQPNNTPSFSFGKTTANL). Positions 534–548 (PANSSTSPAPSIPST) are enriched in low complexity. One copy of the FXF 5 repeat lies at 550–552 (FKF). Positions 574-584 (TEATGNESQDA) are enriched in polar residues. A Phosphoserine modification is found at Ser-581. The 138-residue stretch at 583-720 (DATKVDATPE…AIEDAKKEMK (138 aa)) folds into the RanBD1 domain. Thr-590 carries the post-translational modification Phosphothreonine.

As to quaternary structure, component of the nuclear pore complex (NPC). NPC constitutes the exclusive means of nucleocytoplasmic transport. NPCs allow the passive diffusion of ions and small molecules and the active, nuclear transport receptor-mediated bidirectional transport of macromolecules such as proteins, RNAs, ribonucleoparticles (RNPs), and ribosomal subunits across the nuclear envelope. Due to its 8-fold rotational symmetry, all subunits are present with 8 copies or multiples thereof. Binds to the nuclear basket of the NPC through NUP60 in a (GSP1, GSP2) GTPase-GTP-dependent manner. Interacts through its FG repeats with nuclear transport factors. Interacts with KAP122.

Its subcellular location is the nucleus. It is found in the nuclear pore complex. The protein resides in the nucleus membrane. Functionally, functions as a component of the nuclear pore complex (NPC). NPC components, collectively referred to as nucleoporins (NUPs), can play the role of both NPC structural components and of docking or interaction partners for transiently associated nuclear transport factors. Active directional transport is assured by both, a Phe-Gly (FG) repeat affinity gradient for these transport factors across the NPC and a transport cofactor concentration gradient across the nuclear envelope (GSP1 and GSP2 GTPases associated predominantly with GTP in the nucleus, with GDP in the cytoplasm). As one of the FG repeat nucleoporins NUP2 is involved in interactions with and guidance of nuclear transport receptors such as SRP1-KAP95 (importin alpha and beta) through the NPC. Like the closely related NUP1 it also plays an important role in disassembling and recycling SRP1-KAP95 to the cytoplasm after nuclear import. Upon entry of the heterotrimeric SRP1-KAP95-cargo complex in the nucleus, NUP2 binds through its N-terminus to the SRP1 nuclear localization signal (NLS) binding site, thus accelerating the release of the NLS-cargo. SRP1 in turn is released from NUP2 by binding of the GSP1-GTP associated export factor CSE1. NUP2 may also have a chromatin boundary/insulator activity through indirect interaction with genomic DNA via CSE1 and blocking of heterochromatin spreading. In Saccharomyces cerevisiae (strain ATCC 204508 / S288c) (Baker's yeast), this protein is Nucleoporin NUP2 (NUP2).